Reading from the N-terminus, the 230-residue chain is Alpha-S1-casein (230 aa).

Residues 1–15 form the signal peptide; the sequence is MKLLILTCLVAVALA. Phosphoserine occurs at positions 33, 83, 85, 86, 87, and 88. Residues 60–83 are compositionally biased toward basic and acidic residues; it reads DELKDTRNEPTEDHIMEDTERKES. Disordered stretches follow at residues 60 to 103 and 211 to 230; these read DELK…DILK and TPEG…PQWW. The segment covering 84–96 has biased composition (low complexity); the sequence is GSSSSEEVVSSTT.

It belongs to the alpha-casein family. As to expression, mammary gland specific. Secreted in milk.

It localises to the secreted. Important role in the capacity of milk to transport calcium phosphate. This chain is Alpha-S1-casein (CSN1S1), found in Camelus dromedarius (Dromedary).